A 324-amino-acid polypeptide reads, in one-letter code: Olfactory receptor 52I1 (324 aa).

Topologically, residues 1–29 (MLGPAYNHTMETPASFLLVGIPGLQSSHL) are extracellular. N-linked (GlcNAc...) asparagine glycosylation is present at Asn7. Residues 30–50 (WLAISLSAMYITALLGNTLIV) traverse the membrane as a helical segment. The Cytoplasmic segment spans residues 51-58 (TAIWMDST). The helical transmembrane segment at 59–79 (RHEPMYCFLCVLAAVDIVMAS) threads the bilayer. The Extracellular segment spans residues 80 to 103 (SVVPKMVSIFCSGDSSISFSACFT). Cys101 and Cys193 are disulfide-bonded. The helical transmembrane segment at 104–124 (QMFFVHLATAVETGLLLTMAF) threads the bilayer. Over 125–143 (DRYVAICKPLHYKRILTPQ) the chain is Cytoplasmic. The chain crosses the membrane as a helical span at residues 144–164 (VMLGMSMAVTIRAVTFMTPLS). Residues 165–200 (WMMNHLPFCGSNVVVHSYCKHIALARLACADPVPSS) lie on the Extracellular side of the membrane. The chain crosses the membrane as a helical span at residues 201–221 (LYSLIGSSLMVGSDVAFIAAS). The Cytoplasmic segment spans residues 222 to 241 (YILILRAVFDLSSKTAQLKA). The helical transmembrane segment at 242 to 262 (LSTCGSHVGVMALYYLPGMAS) threads the bilayer. The Extracellular segment spans residues 263–278 (IYAAWLGQDIVPLHTQ). A helical membrane pass occupies residues 279–299 (VLLADLYVIIPATLNPIIYGM). The Cytoplasmic segment spans residues 300–324 (RTKQLLEGIWSYLMHFLFDHSNLGS).

The protein belongs to the G-protein coupled receptor 1 family.

The protein resides in the cell membrane. Odorant receptor. The sequence is that of Olfactory receptor 52I1 (OR52I1) from Homo sapiens (Human).